A 480-amino-acid chain; its full sequence is Endothelial transcription factor GATA-2 (480 aa).

Serine 73 bears the Phosphoserine mark. Arginine 86 is subject to Asymmetric dimethylarginine. The segment at 166 to 208 (SGSHLFGFPPTPPKEVSPDPSTTGAASPASPSAGGSVARGEDK) is disordered. A compositionally biased stretch (low complexity) spans 183-201 (PDPSTTGAASPASPSAGGS). The residue at position 192 (serine 192) is a Phosphoserine. 2 consecutive GATA-type zinc fingers follow at residues 295–319 (CVNC…CNAC) and 349–373 (CANC…CNAC). A Glycyl lysine isopeptide (Lys-Gly) (interchain with G-Cter in SUMO2) cross-link involves residue lysine 389. Positions 457–480 (TPIHPSSSLSFGHPHPSSMVTAMG) are disordered.

As to quaternary structure, interacts with BRD3. Interacts with AR and CCAR1. Interacts with MDFIC.

It is found in the nucleus. Transcriptional activator which regulates endothelin-1 gene expression in endothelial cells. Binds to the consensus sequence 5'-AGATAG-3'. Plays an important role in the regulation of phagocytosis in alveolar macrophages, particularly during P.carinii infection. The polypeptide is Endothelial transcription factor GATA-2 (Rattus norvegicus (Rat)).